Consider the following 281-residue polypeptide: Urease accessory protein UreD 2 (281 aa).

The protein belongs to the UreD family. As to quaternary structure, ureD, UreF and UreG form a complex that acts as a GTP-hydrolysis-dependent molecular chaperone, activating the urease apoprotein by helping to assemble the nickel containing metallocenter of UreC. The UreE protein probably delivers the nickel.

It is found in the cytoplasm. Its function is as follows. Required for maturation of urease via the functional incorporation of the urease nickel metallocenter. The protein is Urease accessory protein UreD 2 of Pseudomonas syringae pv. syringae (strain B728a).